Reading from the N-terminus, the 177-residue chain is SPbeta prophage-derived uncharacterized N-acetyltransferase YokL (177 aa).

Positions 11–170 constitute an N-acetyltransferase domain; sequence LTLRAIQPED…DGICFGMTRE (160 aa).

Belongs to the acetyltransferase family.

The protein is SPbeta prophage-derived uncharacterized N-acetyltransferase YokL (yokL) of Bacillus subtilis (strain 168).